A 200-amino-acid polypeptide reads, in one-letter code: DNA-directed RNA polymerase subunit 7-like protein (200 aa).

It belongs to the eukaryotic RPB7/RPC8 RNA polymerase subunit family.

It is found in the nucleus. This Arabidopsis thaliana (Mouse-ear cress) protein is DNA-directed RNA polymerase subunit 7-like protein (NRPB7L).